A 365-amino-acid chain; its full sequence is Peptide chain release factor 2 (365 aa).

Position 252 is an N5-methylglutamine (glutamine 252).

It belongs to the prokaryotic/mitochondrial release factor family. Post-translationally, methylated by PrmC. Methylation increases the termination efficiency of RF2.

It is found in the cytoplasm. In terms of biological role, peptide chain release factor 2 directs the termination of translation in response to the peptide chain termination codons UGA and UAA. This is Peptide chain release factor 2 from Tolumonas auensis (strain DSM 9187 / NBRC 110442 / TA 4).